The primary structure comprises 210 residues: Ribosomal RNA small subunit methyltransferase G (210 aa).

Residues Gly76, Leu81, 127–128, and Arg142 contribute to the S-adenosyl-L-methionine site; that span reads VE.

The protein belongs to the methyltransferase superfamily. RNA methyltransferase RsmG family.

Its subcellular location is the cytoplasm. The catalysed reaction is guanosine(527) in 16S rRNA + S-adenosyl-L-methionine = N(7)-methylguanosine(527) in 16S rRNA + S-adenosyl-L-homocysteine. Its function is as follows. Specifically methylates the N7 position of guanine in position 527 of 16S rRNA. The protein is Ribosomal RNA small subunit methyltransferase G of Vibrio atlanticus (strain LGP32) (Vibrio splendidus (strain Mel32)).